A 326-amino-acid chain; its full sequence is (+)-T-muurolol synthase ((2E,6E)-farnesyl diphosphate cyclizing) (326 aa).

Mg(2+)-binding residues include aspartate 81 and aspartate 85. The DDXXD motif signature appears at 81 to 85; it reads DDQCD. Arginine 175 serves as a coordination point for substrate. 2 residues coordinate Mg(2+): asparagine 221 and serine 225. A substrate-binding site is contributed by lysine 228. Glutamate 229 provides a ligand contact to Mg(2+). 309 to 310 is a binding site for substrate; it reads RY.

Belongs to the terpene synthase family. Mg(2+) serves as cofactor.

It carries out the reaction (2E,6E)-farnesyl diphosphate + H2O = (+)-T-muurolol + diphosphate. The protein operates within secondary metabolite biosynthesis; terpenoid biosynthesis. Functionally, catalyzes the conversion of (2E,6E)-farnesyl diphosphate (FPP) into (+)-T-muurolol via a 1,10-cyclization, which requires isomerization of FPP to nerolidyl diphosphate (NPP) and then abstraction of the pyrophosphate from intermediate NPP leading to a (E,Z)-germacradienyl (helminthogermacradienyl) cation. The chain is (+)-T-muurolol synthase ((2E,6E)-farnesyl diphosphate cyclizing) from Roseiflexus castenholzii (strain DSM 13941 / HLO8).